The primary structure comprises 481 residues: Solute carrier family 46 member 2 (481 aa).

Residues 1–37 are Cytoplasmic-facing; that stretch reads MGPEAAGPGRGAAPRLQVRTWIEPVVAATQVASSLYE. A helical membrane pass occupies residues 38–58; the sequence is AGLLLVVKASFGAGAGAGAGA. Residues 59–83 are Extracellular-facing; the sequence is ASNHSAGPPRGAPEDQQQRAISNFY. N61 carries N-linked (GlcNAc...) asparagine glycosylation. A helical transmembrane segment spans residues 84–104; sequence IVYNLVVGLTPLLSAYALGWL. Over 105-113 the chain is Cytoplasmic; that stretch reads SDRRHRKVA. The chain crosses the membrane as a helical span at residues 114-134; sequence ICVALLGFLLSRVGLLLKVLL. Topologically, residues 135-143 are extracellular; the sequence is DWPVEVLYG. A helical transmembrane segment spans residues 144–164; sequence AAALNGLCGGFSAFWAGVMAL. Residues 165–179 are Cytoplasmic-facing; sequence GSLGSSEGRRSVRLV. A helical transmembrane segment spans residues 180–200; it reads LIDLILGLAGFCGSMASGHLF. The Extracellular segment spans residues 201–210; the sequence is KQVAGHSGQG. The chain crosses the membrane as a helical span at residues 211-231; sequence LVLTACSVSCATFALLYSLLV. At 232–286 the chain is on the cytoplasmic side; that stretch reads LKVPEAAAGSGQALSAGDSVAGTVGTYRTLDPDHSDKQSVQGLHPPSPGKAKPRR. The interval 263–282 is disordered; that stretch reads PDHSDKQSVQGLHPPSPGKA. A helical membrane pass occupies residues 287–307; the sequence is TIIALLFLGAIVYDLAVVGTV. Over 308–326 the chain is Extracellular; sequence DVMPLFVLREPLSWNQVQV. The helical transmembrane segment at 327–347 threads the bilayer; sequence GYGMAAGYTIFITSFLGVLVF. The Cytoplasmic segment spans residues 348 to 353; the sequence is SRCFQD. A helical membrane pass occupies residues 354-374; it reads TTMIMIGMVSFGSGALLLAFV. Over 375–376 the chain is Extracellular; it reads KE. Residues 377 to 397 traverse the membrane as a helical segment; sequence TYMFYIARAVMLFALIPITTI. At 398 to 412 the chain is on the cytoplasmic side; that stretch reads RSAMSKLIKGSSYGK. The chain crosses the membrane as a helical span at residues 413 to 433; it reads VFVILQLSLTLTGVVTSTVYN. Residues 434–446 are Extracellular-facing; it reads KIYQVTMEKFIGT. The chain crosses the membrane as a helical span at residues 447-467; sequence CFALSSFLSFLAIIPIGIVAY. Over 468–481 the chain is Cytoplasmic; sequence KQASWLQYGDVRET.

This sequence belongs to the major facilitator superfamily. SLC46A family. Post-translationally, glycosylated. Highly expressed by the epididymal duct epithelium.

The protein resides in the endosome membrane. It is found in the cell membrane. The catalysed reaction is N-acetyl-beta-D-glucosaminyl-(1-&gt;4)-1,6-anhydro-N-acetyl-beta-D-muramoyl-L-alanyl-gamma-D-glutamyl-meso-2,6-diaminopimeloyl-D-alanine(out) + n H(+)(out) = N-acetyl-beta-D-glucosaminyl-(1-&gt;4)-1,6-anhydro-N-acetyl-beta-D-muramoyl-L-alanyl-gamma-D-glutamyl-meso-2,6-diaminopimeloyl-D-alanine(in) + n H(+)(in). It carries out the reaction L-alanyl-gamma-D-glutamyl-meso-2,6-diaminopimelate(out) + n H(+)(out) = L-alanyl-gamma-D-glutamyl-meso-2,6-diaminopimelate(in) + n H(+)(in). It catalyses the reaction N-acetyl-D-muramoyl-L-alanyl-D-isoglutamine(out) + n H(+)(out) = N-acetyl-D-muramoyl-L-alanyl-D-isoglutamine(in) + n H(+)(in). The enzyme catalyses 2',3'-cGAMP(out) + n H(+)(out) = 2',3'-cGAMP(in) + n H(+)(in). The catalysed reaction is 3',3'-cGAMP(out) + n H(+)(out) = 3',3'-cGAMP(in) + n H(+)(in). Proton-coupled transporter that delivers pathogen-associated or danger-associated molecular patterns to cytosolic pattern recognition receptors as part of the innate immune response to microbes or tissue injury. Has selectivity toward muropeptides that contain the amino acid diaminopimelic acid (DAP-type peptidoglycan muropeptides) including Tri-DAP and tracheal toxin (TCT), common in Gram-negative bacteria and Gram-positive bacilli. In the context of immune recognition of skin microbiota, shuttles bacterial muropeptides across the endolysosomal membranes into the cytosol for recognition by NOD1, triggering MYD88-dependent secretion of IL1A and neutrophil recruitment in a pyroptosis-type inflammatory process. To a lesser extent and redundantly, transports muramyl dipeptides derived from most bacterial proteoglycans, eliciting NOD2 receptor activation and downstream inflammatory responses. Postulated to function as an importer of cyclic GMP-AMP dinucleotides (cGAMPs) in monocyte and macrophage cell lineages. Selectively imports cGAMPs derived from pathogenic bacteria such as 3'3'-cGAMP thus providing for differential immune recognition of pathogenic versus commensal bacteria. During tumorigenesis may transport extracellular tumor-derived 2'3'-cGAMP across the plasma membrane of M1-polarized macrophages to activate the anti-tumoral stimulator of interferon genes (STING) pathway. The transport mechanism, its electrogenicity and stoichiometry remain to be elucidated. The sequence is that of Solute carrier family 46 member 2 from Canis lupus familiaris (Dog).